The chain runs to 252 residues: 2-succinyl-6-hydroxy-2,4-cyclohexadiene-1-carboxylate synthase (252 aa).

The protein belongs to the AB hydrolase superfamily. MenH family. In terms of assembly, monomer.

It carries out the reaction 5-enolpyruvoyl-6-hydroxy-2-succinyl-cyclohex-3-ene-1-carboxylate = (1R,6R)-6-hydroxy-2-succinyl-cyclohexa-2,4-diene-1-carboxylate + pyruvate. The protein operates within quinol/quinone metabolism; 1,4-dihydroxy-2-naphthoate biosynthesis; 1,4-dihydroxy-2-naphthoate from chorismate: step 3/7. It functions in the pathway quinol/quinone metabolism; menaquinone biosynthesis. Catalyzes a proton abstraction reaction that results in 2,5-elimination of pyruvate from 2-succinyl-5-enolpyruvyl-6-hydroxy-3-cyclohexene-1-carboxylate (SEPHCHC) and the formation of 2-succinyl-6-hydroxy-2,4-cyclohexadiene-1-carboxylate (SHCHC). The protein is 2-succinyl-6-hydroxy-2,4-cyclohexadiene-1-carboxylate synthase of Salmonella choleraesuis (strain SC-B67).